A 198-amino-acid polypeptide reads, in one-letter code: tRNA (pseudouridine(54)-N(1))-methyltransferase (198 aa).

S-adenosyl-L-methionine-binding positions include Leu130, Gly153, 176–181 (LSPLEL), and Cys186.

This sequence belongs to the methyltransferase superfamily. TrmY family. In terms of assembly, homodimer.

Its subcellular location is the cytoplasm. The catalysed reaction is pseudouridine(54) in tRNA + S-adenosyl-L-methionine = N(1)-methylpseudouridine(54) in tRNA + S-adenosyl-L-homocysteine + H(+). In terms of biological role, specifically catalyzes the N1-methylation of pseudouridine at position 54 (Psi54) in tRNAs. The chain is tRNA (pseudouridine(54)-N(1))-methyltransferase from Methanococcus maripaludis (strain C6 / ATCC BAA-1332).